Consider the following 121-residue polypeptide: Small ribosomal subunit protein uS13 (121 aa).

Residues 96-121 form a disordered region; sequence PVRGQNTKNNARTRKGKAVAIAGKKK. The segment covering 106 to 121 has biased composition (basic residues); that stretch reads ARTRKGKAVAIAGKKK.

Belongs to the universal ribosomal protein uS13 family. Part of the 30S ribosomal subunit. Forms a loose heterodimer with protein S19. Forms two bridges to the 50S subunit in the 70S ribosome.

Functionally, located at the top of the head of the 30S subunit, it contacts several helices of the 16S rRNA. In the 70S ribosome it contacts the 23S rRNA (bridge B1a) and protein L5 of the 50S subunit (bridge B1b), connecting the 2 subunits; these bridges are implicated in subunit movement. Contacts the tRNAs in the A and P-sites. This chain is Small ribosomal subunit protein uS13, found in Streptococcus pneumoniae serotype 4 (strain ATCC BAA-334 / TIGR4).